The sequence spans 283 residues: Probable endonuclease 4 (283 aa).

Positions 69, 109, 145, 179, 182, 216, 229, 231, and 261 each coordinate Zn(2+).

It belongs to the AP endonuclease 2 family. Zn(2+) serves as cofactor.

The catalysed reaction is Endonucleolytic cleavage to 5'-phosphooligonucleotide end-products.. In terms of biological role, endonuclease IV plays a role in DNA repair. It cleaves phosphodiester bonds at apurinic or apyrimidinic (AP) sites, generating a 3'-hydroxyl group and a 5'-terminal sugar phosphate. The protein is Probable endonuclease 4 of Desulfosudis oleivorans (strain DSM 6200 / JCM 39069 / Hxd3) (Desulfococcus oleovorans).